The sequence spans 98 residues: MVAVRRPWPVMVAMLLVLLACLGALVDAYPAKPEAPGEDASPEELSRYYASLRHYLNLVTRQRYGKREVPAALFSKLLFTDDSENLPFRSRPEGVDQW.

Residues methionine 1–alanine 28 form the signal peptide. Serine 41 carries the phosphoserine modification. Tyrosine 64 bears the Tyrosine amide mark. Positions glutamate 68 to tryptophan 98 are excised as a propeptide.

It belongs to the NPY family. In terms of processing, the peptide YY form is cleaved at Pro-30 by the prolyl endopeptidase FAP (seprase) activity (in vitro) to generate peptide YY(3-36).

Its subcellular location is the secreted. Its function is as follows. This gut peptide inhibits exocrine pancreatic secretion, has a vasoconstrictory action and inhibitis jejunal and colonic mobility. This chain is Peptide YY (Pyy), found in Rattus norvegicus (Rat).